Reading from the N-terminus, the 424-residue chain is Histidinol dehydrogenase homolog (424 aa).

Residues Gln250 and His253 each coordinate Zn(2+). Active-site proton acceptor residues include Glu318 and His319. 2 residues coordinate Zn(2+): Asp352 and His411.

Belongs to the histidinol dehydrogenase family. The cofactor is Zn(2+).

This chain is Histidinol dehydrogenase homolog, found in Shouchella clausii (strain KSM-K16) (Alkalihalobacillus clausii).